The following is a 206-amino-acid chain: Methyltransferase-like 26 (206 aa).

The protein belongs to the UPF0585 family.

The sequence is that of Methyltransferase-like 26 from Danio rerio (Zebrafish).